A 170-amino-acid chain; its full sequence is Inosine/xanthosine triphosphatase (170 aa).

The protein belongs to the YjjX NTPase family. Homodimer. Mg(2+) serves as cofactor. It depends on Mn(2+) as a cofactor.

The catalysed reaction is XTP + H2O = XDP + phosphate + H(+). The enzyme catalyses ITP + H2O = IDP + phosphate + H(+). Phosphatase that hydrolyzes non-canonical purine nucleotides such as XTP and ITP to their respective diphosphate derivatives. Probably excludes non-canonical purines from DNA/RNA precursor pool, thus preventing their incorporation into DNA/RNA and avoiding chromosomal lesions. The protein is Inosine/xanthosine triphosphatase of Aliivibrio fischeri (strain ATCC 700601 / ES114) (Vibrio fischeri).